Reading from the N-terminus, the 453-residue chain is Protein ECM18 (453 aa).

The AB hydrolase-1 domain maps to 130-435 (LLIHGYAASS…SGHNLFLDNP (306 aa)). The HXXXXD motif motif lies at 428–433 (HNLFLD).

It belongs to the peptidase S33 family. ABHD4/ABHD5 subfamily.

Its subcellular location is the mitochondrion. May be involved in cell wall organization and biogenesis. In Saccharomyces cerevisiae (strain ATCC 204508 / S288c) (Baker's yeast), this protein is Protein ECM18 (ECM18).